We begin with the raw amino-acid sequence, 737 residues long: ATP-dependent RNA helicase DDX50 (737 aa).

Residues 1 to 131 are disordered; that stretch reads MPGKLLWGDI…SDNKLEETLT (131 aa). Residues 11 to 20 show a composition bias toward acidic residues; that stretch reads MELEAPLEES. Basic and acidic residues-rich tracts occupy residues 38 to 51, 67 to 87, and 117 to 131; these read HYDSDEKSETRENG, KEKLNGDTEEGFNRLSDEFSK, and STHKSSDNKLEETLT. Serine 41, serine 82, serine 86, serine 121, and serine 122 each carry phosphoserine. A Glycyl lysine isopeptide (Lys-Gly) (interchain with G-Cter in SUMO2) cross-link involves residue lysine 125. The short motif at 137-165 is the Q motif element; the sequence is GAFSNFPISEETIKLLKGRGVTYLFPIQV. In terms of domain architecture, Helicase ATP-binding spans 168–347; sequence FGPVYEGKDL…KKYMKSRYEQ (180 aa). An ATP-binding site is contributed by 181-188; that stretch reads ARTGTGKT. Threonine 247 bears the Phosphothreonine mark. Positions 290–293 match the DEVD box motif; that stretch reads DEVD. Residues 380 to 524 enclose the Helicase C-terminal domain; sequence DVLQVYSGSE…GVPSTMDLVK (145 aa). Serine 518 carries the phosphoserine modification. Residues 668–737 form a disordered region; that stretch reads YDGNTSSNSR…RSGGHKRSFD (70 aa). A compositionally biased stretch (low complexity) spans 673 to 687; it reads SSNSRQRSGWSSGRS. Over residues 691–701 the composition is skewed to gly residues; sequence GRSGGRSGGRS. The segment covering 702–712 has biased composition (low complexity); it reads GRQSRQGSRSG. Positions 720–737 are enriched in basic residues; it reads RSGNRNRSRSGGHKRSFD.

Belongs to the DEAD box helicase family. DDX21/DDX50 subfamily. Interacts with C1QBP. Interacts with the ubiquitin ligase CTLH complex through GID4. Interacts with TICAM1. As to expression, highest expression in skeletal muscle, liver, heart, placenta, and kidney.

Its subcellular location is the nucleus. It is found in the nucleolus. It localises to the cytoplasm. It carries out the reaction ATP + H2O = ADP + phosphate + H(+). In terms of biological role, ATP-dependent RNA helicase that may play a role in various aspects of RNA metabolism including pre-mRNA splicing or ribosomal RNA production. Also acts as a viral restriction factor and promotes the activation of the NF-kappa-B and IRF3 signaling pathways following its stimulation with viral RNA or infection with RNA and DNA viruses. For instance, decreases vaccinia virus, herpes simplex virus, Zika virus or dengue virus replication during the early stage of infection. Mechanistically, acts via the adapter TICAM1 and independently of the DDX1-DDX21-DHX36 helicase complex to induce the production of interferon-beta. The sequence is that of ATP-dependent RNA helicase DDX50 (DDX50) from Homo sapiens (Human).